We begin with the raw amino-acid sequence, 816 residues long: Phosphatidylinositol 4-kinase beta (816 aa).

Disordered regions lie at residues 1 to 30, 99 to 120, and 248 to 318; these read MGDTVVEPAPLKPTSEPTSGPPGNNGGSLL, EEEDEMGASVASGTAKGARRRR, and AHRK…SFSS. G2 is subject to N-acetylglycine. The interaction with ACBD3 stretch occupies residues 2-68; sequence GDTVVEPAPL…VKLLHGGVAV (67 aa). The PIK helical domain occupies 52 to 242; the sequence is CQDVLEKVKL…GTKLRKLILS (191 aa). S258 is subject to Phosphoserine. Phosphothreonine is present on T263. Residues S266, S275, S277, S284, and S294 each carry the phosphoserine modification. Composition is skewed to polar residues over residues 278–297 and 306–318; these read DATASISLSSNLKRTASNPK and SSSTESIDNSFSS. S428 carries the post-translational modification Phosphoserine. T438 is modified (phosphothreonine). Phosphoserine is present on S511. Phosphothreonine is present on residues T517 and T519. Residues 535–801 form the PI3K/PI4K catalytic domain; the sequence is EPWQEKVRRI…MVDGSMRSIT (267 aa). Positions 541-547 are G-loop; it reads VRRIREG. Residues 668-676 form a catalytic loop region; that stretch reads QVKDRHNGN. Positions 687 to 711 are activation loop; the sequence is HIDFGFILSSSPRNLGFETSAFKLT.

The protein belongs to the PI3/PI4-kinase family. Type III PI4K subfamily. As to quaternary structure, interacts with ARF1 and ARF3 in the Golgi complex, but not with ARF4, ARF5 or ARF6. Interacts with NCS1/FREQ in a calcium-independent manner. Interacts with CALN1/CABP8 and CALN2/CABP7; in a calcium-dependent manner; this interaction competes with NCS1/FREQ binding. Interacts with ACBD3. Interacts with ARMH3, YWHAB, YWHAE, YWHAG, YWHAH, YWHAQ, YWHAZ and SFN. Interacts with GGA2 (via VHS domain); the interaction is important for PI4KB location at the Golgi apparatus membrane. Interacts with ATG9A. Requires Mg(2+) as cofactor. It depends on Mn(2+) as a cofactor.

It is found in the endomembrane system. Its subcellular location is the mitochondrion outer membrane. It localises to the rough endoplasmic reticulum membrane. The protein resides in the golgi apparatus. The protein localises to the golgi apparatus membrane. It catalyses the reaction a 1,2-diacyl-sn-glycero-3-phospho-(1D-myo-inositol) + ATP = a 1,2-diacyl-sn-glycero-3-phospho-(1D-myo-inositol 4-phosphate) + ADP + H(+). Inhibited by wortmannin. Increased kinase activity upon interaction with NCS1/FREQ. In terms of biological role, phosphorylates phosphatidylinositol (PI) in the first committed step in the production of the second messenger inositol-1,4,5,-trisphosphate (PIP). May regulate Golgi disintegration/reorganization during mitosis, possibly via its phosphorylation. Involved in Golgi-to-plasma membrane trafficking. In Callithrix jacchus (White-tufted-ear marmoset), this protein is Phosphatidylinositol 4-kinase beta (PI4KB).